A 378-amino-acid polypeptide reads, in one-letter code: Chaperone protein DnaJ (378 aa).

The J domain occupies 4–68 (DFYEILGVSR…ETRARYDRFG (65 aa)). The CR-type zinc-finger motif lies at 136 to 218 (GGEKEIRIPH…CGGAGRKQET (83 aa)). Residues Cys149, Cys152, Cys166, Cys169, Cys192, Cys195, Cys206, and Cys209 each contribute to the Zn(2+) site. CXXCXGXG motif repeat units lie at residues 149 to 156 (CKTCSGSG), 166 to 173 (CGTCNGTG), 192 to 199 (CPTCNGEG), and 206 to 213 (CESCGGAG).

It belongs to the DnaJ family. As to quaternary structure, homodimer. Zn(2+) is required as a cofactor.

It localises to the cytoplasm. Participates actively in the response to hyperosmotic and heat shock by preventing the aggregation of stress-denatured proteins and by disaggregating proteins, also in an autonomous, DnaK-independent fashion. Unfolded proteins bind initially to DnaJ; upon interaction with the DnaJ-bound protein, DnaK hydrolyzes its bound ATP, resulting in the formation of a stable complex. GrpE releases ADP from DnaK; ATP binding to DnaK triggers the release of the substrate protein, thus completing the reaction cycle. Several rounds of ATP-dependent interactions between DnaJ, DnaK and GrpE are required for fully efficient folding. Also involved, together with DnaK and GrpE, in the DNA replication of plasmids through activation of initiation proteins. This Picosynechococcus sp. (strain ATCC 27264 / PCC 7002 / PR-6) (Agmenellum quadruplicatum) protein is Chaperone protein DnaJ.